We begin with the raw amino-acid sequence, 266 residues long: Urease accessory protein UreD (266 aa).

Belongs to the UreD family. UreD, UreF and UreG form a complex that acts as a GTP-hydrolysis-dependent molecular chaperone, activating the urease apoprotein by helping to assemble the nickel containing metallocenter of UreC. The UreE protein probably delivers the nickel.

It localises to the cytoplasm. Its function is as follows. Required for maturation of urease via the functional incorporation of the urease nickel metallocenter. The chain is Urease accessory protein UreD from Jannaschia sp. (strain CCS1).